Here is a 464-residue protein sequence, read N- to C-terminus: E3 ubiquitin-protein ligase TRAIP (464 aa).

The RING-type; atypical zinc finger occupies 7-50; it reads CTICSDFFDNARDVAAITCGHTFHQECLLQWFHSAPHRTCPQCR. Coiled-coil stretches lie at residues 142-186 and 236-277; these read LDKQ…MIRD and AQKA…LQKT. The interval 439-464 is disordered; the sequence is KRKKVSRPTACTSSLANQPRLEDFLK. The short motif at 456-464 is the PIP-box element; it reads QPRLEDFLK.

The protein belongs to the TRAIP family.

It localises to the nucleus. The protein resides in the nucleoplasm. Its subcellular location is the nucleolus. It is found in the chromosome. The protein localises to the cytoplasm. The enzyme catalyses S-ubiquitinyl-[E2 ubiquitin-conjugating enzyme]-L-cysteine + [acceptor protein]-L-lysine = [E2 ubiquitin-conjugating enzyme]-L-cysteine + N(6)-ubiquitinyl-[acceptor protein]-L-lysine.. It functions in the pathway protein modification; protein ubiquitination. Functionally, E3 ubiquitin ligase required to protect genome stability in response to replication stress. Acts as a key regulator of interstrand cross-link repair, which takes place when both strands of duplex DNA are covalently tethered together, thereby blocking replication and transcription. Controls the choice between the two pathways of replication-coupled interstrand-cross-link repair by mediating ubiquitination of mcm7 subunit of the CMG helicase complex. Short ubiquitin chains on mcm7 promote recruitment of DNA glycosylase neil3. If the interstrand cross-link cannot be cleaved by neil3, the ubiquitin chains continue to grow on mcm7, promoting the unloading of the CMG helicase complex by the vcp/p97 ATPase, enabling the Fanconi anemia DNA repair pathway. Only catalyzes ubiquitination of mcm7 when forks converge. Also involved in the repair of covalent DNA-protein cross-links (DPCs) during DNA synthesis: promotes ubiquitination of DPCs, leading to their degradation by the proteasome. Also acts as a negative regulator of innate immune signaling by inhibiting activation of NF-kappa-B mediated by TNF. In Xenopus laevis (African clawed frog), this protein is E3 ubiquitin-protein ligase TRAIP.